The sequence spans 582 residues: Pre-hexon-linking protein IIIa (582 aa).

Residues 1-114 (MQRPAIIAER…ALLERVARYN (114 aa)) are peripentonal hexon-tethering domain. The interval 146–259 (GSLVALNAFL…FTNTNSLSRD (114 aa)) is binding to hexon-linking protein. A Phosphoserine; by host modification is found at serine 233. At threonine 282 the chain carries Phosphothreonine; by host. A disordered region spans residues 437–479 (GKKEAGDEGPLLDSRASSPFPSLTSLPASVNSGRTTRPRLTGE). Residues 451 to 471 (RASSPFPSLTSLPASVNSGRT) are compositionally biased toward polar residues. Serine 458 and serine 465 each carry phosphoserine; by host. At tyrosine 482 the chain carries Phosphotyrosine; by host. Serine 503 is modified (phosphoserine; by host). Basic and acidic residues predominate over residues 517-526 (ERREWEERQP). A disordered region spans residues 517-582 (ERREWEERQP…RPQGCIGSLY (66 aa)). Residues 530 to 543 (RPPRQRWQRRKKGA) show a composition bias toward basic residues. Residues 566–582 (GNPFAHLRPQGCIGSLY) constitute a propeptide that is removed on maturation.

It belongs to the adenoviridae hexon-linking protein IIIa family. In terms of assembly, interacts with hexon proteins; this interaction tethers the peripentonal hexons to hexons situated in the facet. Interacts with the penton protein (via N-terminus). Interacts with packaging protein 3; this interaction is required to promote correct genome packaging. Post-translationally, cleaved near the C-terminus by the viral protease during virion maturation to form the mature protein.

The protein localises to the virion. It is found in the host nucleus. Functionally, structural component of the virion that acts as a cement protein on the capsid exterior which mediates the interactions between the hexons, including the peripentonal hexons, and reaches all the way to the penton vertices. Two hexon linking proteins IIIa, one from each facet, stabilize the unique edge interface between a pair of facets. As the virus enters the host cell, hexon linking proteins IIIa are shed concomitant with virion acidification in the endosome. During virus assembly, seems to play a role in the serotype specificity of the packaging of viral DNA via its interaction with packaging protein 3. The protein is Pre-hexon-linking protein IIIa of Human adenovirus A serotype 12 (HAdV-12).